We begin with the raw amino-acid sequence, 137 residues long: Transcription antitermination protein NusB (137 aa).

This sequence belongs to the NusB family.

Its function is as follows. Involved in transcription antitermination. Required for transcription of ribosomal RNA (rRNA) genes. Binds specifically to the boxA antiterminator sequence of the ribosomal RNA (rrn) operons. This is Transcription antitermination protein NusB from Aeromonas salmonicida (strain A449).